A 261-amino-acid chain; its full sequence is Type III pantothenate kinase (261 aa).

6–13 (DAGNSNIT) is an ATP binding site. Residues Y100 and 107-110 (GADR) contribute to the substrate site. D109 functions as the Proton acceptor in the catalytic mechanism. Position 129 (D129) interacts with K(+). T132 contacts ATP. Substrate is bound at residue T184.

The protein belongs to the type III pantothenate kinase family. In terms of assembly, homodimer. The cofactor is NH4(+). K(+) serves as cofactor.

The protein localises to the cytoplasm. The catalysed reaction is (R)-pantothenate + ATP = (R)-4'-phosphopantothenate + ADP + H(+). It functions in the pathway cofactor biosynthesis; coenzyme A biosynthesis; CoA from (R)-pantothenate: step 1/5. Functionally, catalyzes the phosphorylation of pantothenate (Pan), the first step in CoA biosynthesis. This Solibacter usitatus (strain Ellin6076) protein is Type III pantothenate kinase.